Here is a 385-residue protein sequence, read N- to C-terminus: Protein pelota homolog (385 aa).

A Glycyl lysine isopeptide (Lys-Gly) (interchain with G-Cter in SUMO2) cross-link involves residue Lys162. A phosphoserine mark is found at Ser374, Ser380, Ser381, and Ser382.

Belongs to the eukaryotic release factor 1 family. Pelota subfamily. As to quaternary structure, component of the Pelota-HBS1L complex, also named Dom34-Hbs1 complex, composed of PELO and HBS1L. Interacts with PINK1. Interacts with ABCE1. Interacts with CNOT4. It depends on a divalent metal cation as a cofactor.

Its subcellular location is the cytoplasm. Component of the Pelota-HBS1L complex, a complex that recognizes stalled ribosomes and triggers the No-Go Decay (NGD) pathway. In the Pelota-HBS1L complex, PELO recognizes ribosomes stalled at the 3' end of an mRNA and engages stalled ribosomes by destabilizing mRNA in the mRNA channel. Following mRNA extraction from stalled ribosomes by the SKI complex, the Pelota-HBS1L complex promotes recruitment of ABCE1, which drives the disassembly of stalled ribosomes, followed by degradation of damaged mRNAs as part of the NGD pathway. As part of the PINK1-regulated signaling, upon mitochondrial damage is recruited to the ribosome/mRNA-ribonucleoprotein complex associated to mitochondrial outer membrane thereby enabling the recruitment of autophagy receptors and induction of mitophagy. In Pongo abelii (Sumatran orangutan), this protein is Protein pelota homolog (PELO).